The following is a 356-amino-acid chain: Probable cinnamyl alcohol dehydrogenase (356 aa).

Position 47 (cysteine 47) interacts with Zn(2+). Position 49 (serine 49) interacts with NADP(+). 7 residues coordinate Zn(2+): histidine 69, glutamate 70, cysteine 100, cysteine 103, cysteine 106, cysteine 114, and cysteine 163. NADP(+) contacts are provided by residues threonine 167, 188–193 (GLGGVG), 211–216 (SSSDKK), threonine 251, glycine 275, and 298–300 (SFI).

Belongs to the zinc-containing alcohol dehydrogenase family. As to quaternary structure, homodimer. Zn(2+) serves as cofactor.

It catalyses the reaction (E)-cinnamyl alcohol + NADP(+) = (E)-cinnamaldehyde + NADPH + H(+). The catalysed reaction is (E)-coniferol + NADP(+) = (E)-coniferaldehyde + NADPH + H(+). It carries out the reaction (E)-sinapyl alcohol + NADP(+) = (E)-sinapaldehyde + NADPH + H(+). The enzyme catalyses (E)-4-coumaroyl alcohol + NADP(+) = (E)-4-coumaraldehyde + NADPH + H(+). It catalyses the reaction (E)-caffeyl alcohol + NADP(+) = (E)-caffeyl aldehyde + NADPH + H(+). It functions in the pathway aromatic compound metabolism; phenylpropanoid biosynthesis. Involved in lignin biosynthesis. Catalyzes the final step specific for the production of lignin monomers. Catalyzes the NADPH-dependent reduction of coniferaldehyde, 5-hydroxyconiferaldehyde, sinapaldehyde, 4-coumaraldehyde and caffeyl aldehyde to their respective alcohols. The sequence is that of Probable cinnamyl alcohol dehydrogenase (CAD) from Eucalyptus globulus (Tasmanian blue gum).